A 398-amino-acid chain; its full sequence is Digeranylgeranylglycerophospholipid reductase (398 aa).

Residues Ala15, Glu34, Cys45, Ala46, Gly48, Arg99, Ala123, Asp280, Gly292, and Ile293 each contribute to the FAD site. Val372 contributes to the a 2,3-bis-O-(geranylgeranyl)-sn-glycerol 1-phospholipid binding site.

It belongs to the geranylgeranyl reductase family. DGGGPL reductase subfamily. FAD is required as a cofactor.

It catalyses the reaction a 2,3-bis-O-phytanyl-sn-glycerol 1-phospholipid + 8 oxidized 2[4Fe-4S]-[ferredoxin] = a 2,3-bis-O-(geranylgeranyl)-sn-glycerol 1-phospholipid + 8 reduced 2[4Fe-4S]-[ferredoxin] + 16 H(+). The enzyme catalyses 2,3-bis-O-(phytanyl)-sn-glycerol 1-phosphate + 8 oxidized 2[4Fe-4S]-[ferredoxin] = 2,3-bis-O-(geranylgeranyl)-sn-glycerol 1-phosphate + 8 reduced 2[4Fe-4S]-[ferredoxin] + 16 H(+). The catalysed reaction is a 2,3-bis-O-phytanyl-sn-glycerol 1-phospholipid + 8 A = a 2,3-bis-O-(geranylgeranyl)-sn-glycerol 1-phospholipid + 8 AH2. It carries out the reaction CDP-2,3-bis-O-(geranylgeranyl)-sn-glycerol + 8 AH2 = CDP-2,3-bis-O-(phytanyl)-sn-glycerol + 8 A. It catalyses the reaction archaetidylserine + 8 AH2 = 2,3-bis-O-phytanyl-sn-glycero-3-phospho-L-serine + 8 A. It participates in membrane lipid metabolism; glycerophospholipid metabolism. Its function is as follows. Is involved in the reduction of 2,3-digeranylgeranylglycerophospholipids (unsaturated archaeols) into 2,3-diphytanylglycerophospholipids (saturated archaeols) in the biosynthesis of archaeal membrane lipids. Catalyzes the formation of archaetidic acid (2,3-di-O-phytanyl-sn-glyceryl phosphate) from 2,3-di-O-geranylgeranylglyceryl phosphate (DGGGP) via the hydrogenation of each double bond of the isoprenoid chains. Is also probably able to reduce double bonds of geranyl groups in CDP-2,3-bis-O-(geranylgeranyl)-sn-glycerol and archaetidylserine, thus acting at various stages in the biosynthesis of archaeal membrane lipids. The protein is Digeranylgeranylglycerophospholipid reductase of Methanoculleus marisnigri (strain ATCC 35101 / DSM 1498 / JR1).